Consider the following 428-residue polypeptide: Chaperone SurA (428 aa).

The first 20 residues, 1 to 20 (MKNWKTLLLGIAMIANTSFA), serve as a signal peptide directing secretion. 2 PpiC domains span residues 171 to 272 (STEL…KVND) and 282 to 382 (VTEV…ELLD).

The protein resides in the periplasm. The catalysed reaction is [protein]-peptidylproline (omega=180) = [protein]-peptidylproline (omega=0). Its function is as follows. Chaperone involved in the correct folding and assembly of outer membrane proteins. Recognizes specific patterns of aromatic residues and the orientation of their side chains, which are found more frequently in integral outer membrane proteins. May act in both early periplasmic and late outer membrane-associated steps of protein maturation. The polypeptide is Chaperone SurA (Salmonella choleraesuis (strain SC-B67)).